The chain runs to 205 residues: MIGKLKGVVDSYGEDFVILDVHGVGYEVHCSARTLQRLPPAGEATDLAIETVVREDMIRLYGFRSDAEREWFRLLQTVQGVGTRVALGLLSVLEPAELATAIATGDKGAVARAPGVGPRLAARLVAELKDKAPAFAPVDPALVRLAGAVEARTAPQPVADAISALVNLGYPQAQASAAVAAALQSAGAEAEAKTLIRLGLRELAR.

Positions 1-64 (MIGKLKGVVD…EDMIRLYGFR (64 aa)) are domain I. The segment at 65–143 (SDAEREWFRL…AFAPVDPALV (79 aa)) is domain II. The interval 144 to 152 (RLAGAVEAR) is flexible linker. A domain III region spans residues 153–205 (TAPQPVADAISALVNLGYPQAQASAAVAAALQSAGAEAEAKTLIRLGLRELAR).

It belongs to the RuvA family. As to quaternary structure, homotetramer. Forms an RuvA(8)-RuvB(12)-Holliday junction (HJ) complex. HJ DNA is sandwiched between 2 RuvA tetramers; dsDNA enters through RuvA and exits via RuvB. An RuvB hexamer assembles on each DNA strand where it exits the tetramer. Each RuvB hexamer is contacted by two RuvA subunits (via domain III) on 2 adjacent RuvB subunits; this complex drives branch migration. In the full resolvosome a probable DNA-RuvA(4)-RuvB(12)-RuvC(2) complex forms which resolves the HJ.

It localises to the cytoplasm. Functionally, the RuvA-RuvB-RuvC complex processes Holliday junction (HJ) DNA during genetic recombination and DNA repair, while the RuvA-RuvB complex plays an important role in the rescue of blocked DNA replication forks via replication fork reversal (RFR). RuvA specifically binds to HJ cruciform DNA, conferring on it an open structure. The RuvB hexamer acts as an ATP-dependent pump, pulling dsDNA into and through the RuvAB complex. HJ branch migration allows RuvC to scan DNA until it finds its consensus sequence, where it cleaves and resolves the cruciform DNA. This is Holliday junction branch migration complex subunit RuvA from Methylobacterium sp. (strain 4-46).